The sequence spans 405 residues: Transposase from transposon Tn916 (405 aa).

The Core-binding (CB) domain maps to Gly-79 to Ile-163. In terms of domain architecture, Tyr recombinase spans Val-186–Lys-392. Residues Arg-225, Lys-264, His-343, Arg-346, and His-369 contribute to the active site. The O-(3'-phospho-DNA)-tyrosine intermediate role is filled by Tyr-379.

This sequence belongs to the 'phage' integrase family.

In Enterococcus faecalis (Streptococcus faecalis), this protein is Transposase from transposon Tn916 (Int-Tn).